The sequence spans 126 residues: Probable small nuclear ribonucleoprotein Sm D1 (126 aa).

A Sm domain is found at 2-74 (KLVRFLMKLS…IRYIILPDPL (73 aa)). Positions 86 to 126 (RKKARAARAGASRGRGRGGMRGGRGGRGRGRGGPRGGGPRR) are disordered. Residues 99–126 (GRGRGGMRGGRGGRGRGRGGPRGGGPRR) show a composition bias toward basic residues.

This sequence belongs to the snRNP core protein family.

The protein localises to the nucleus. The protein resides in the cytoplasm. It localises to the cytosol. In terms of biological role, plays a role in pre-mRNA splicing as a core component of the spliceosomal U1, U2, U4 and U5 small nuclear ribonucleoproteins (snRNPs), the building blocks of the spliceosome. The polypeptide is Probable small nuclear ribonucleoprotein Sm D1 (snr-3) (Caenorhabditis elegans).